The following is a 461-amino-acid chain: Coronin-1A (461 aa).

N-acetylserine is present on S2. S2 carries the post-translational modification Phosphoserine; by PKC. WD repeat units lie at residues 13-63, 73-110, 123-160, 164-204, 207-251, 258-296, and 302-349; these read HVFG…LVLP, NAPT…MVWE, PVVT…MVWD, GAAM…RIIE, KGTV…ALWD, PLSL…RYFE, and PFLH…EPIA. The span at 403–418 shows a compositional bias: basic and acidic residues; the sequence is ELRVNRGLDTGRRRAA. The segment at 403 to 432 is disordered; the sequence is ELRVNRGLDTGRRRAAPEASGTPSSDAVSR. At T412 the chain carries Phosphothreonine; by PKC. A Phosphoserine modification is found at S422. A coiled-coil region spans residues 424-460; that stretch reads TPSSDAVSRLEEEMRKLQATVQELQKRLDRLEETVQA. Position 449 is an N6-acetyllysine (K449).

The protein belongs to the WD repeat coronin family. As to quaternary structure, binds actin. In terms of processing, phosphorylation at Thr-412 by PKC strongly down-regulates the association with actin. Polyubiquitinated by RNF128 with 'Lys-48'-linked chains, leading to proteasomal degradation. Expressed in brain, thymus, spleen, bone marrow and lymph node. Low in lung and gut.

Its subcellular location is the cytoplasm. It is found in the cytoskeleton. It localises to the cell cortex. The protein resides in the cytoplasmic vesicle. The protein localises to the phagosome membrane. May be a crucial component of the cytoskeleton of highly motile cells, functioning both in the invagination of large pieces of plasma membrane, as well as in forming protrusions of the plasma membrane involved in cell locomotion. In mycobacteria-infected cells, its retention on the phagosomal membrane prevents fusion between phagosomes and lysosomes. This Homo sapiens (Human) protein is Coronin-1A (CORO1A).